We begin with the raw amino-acid sequence, 833 residues long: F1 capsule-anchoring protein (833 aa).

The signal sequence occupies residues 1–25 (MRYSKLFLCAGLTLATLPCWGRAYT). Residues Cys807 and Cys829 are joined by a disulfide bond.

The protein belongs to the fimbrial export usher family.

The protein localises to the cell outer membrane. Functionally, a probable role in capsular biogenesis. It is likely that the caf1A molecule binds F1 antigen subunits during the extracellular secretion process. The sequence is that of F1 capsule-anchoring protein (caf1A) from Yersinia pestis.